Consider the following 286-residue polypeptide: Transcription factor MafA (286 aa).

Phosphoserine is present on residues S14 and S49. Over residues 51 to 85 (SSTPLSTPCSSVPSSPSFCAPSPGGQPSAGPTAAP) the composition is skewed to low complexity. The tract at residues 51–87 (SSTPLSTPCSSVPSSPSFCAPSPGGQPSAGPTAAPLG) is disordered. 2 positions are modified to phosphothreonine: T53 and T57. Phosphoserine is present on residues S61 and S65. At T113 the chain carries Phosphothreonine. The tract at residues 126–167 (HHHHHHHQSYESFRPQPFGGEELPPAAHHHNAHHHHHHHHLR) is disordered. Residues 152–166 (AHHHNAHHHHHHHHL) show a composition bias toward basic residues. A basic motif region spans residues 199-224 (RLKQNRRTLKNRGYAQSCRYKRVQQR). Residues 199-262 (RLKQNRRTLK…DLYKEKYEKL (64 aa)) form the bZIP domain. Positions 227–248 (LENEKCQLQSQVEQLKQEVSRL) are leucine-zipper. The disordered stretch occupies residues 265–286 (RGFPREPSPPAAPKTTAADFFM). S272 is modified (phosphoserine). The span at 277–286 (PKTTAADFFM) shows a compositional bias: low complexity.

The protein belongs to the bZIP family. Maf subfamily. Forms homodimers or heterodimers. May interact (via leucine-zipper domain) with MAFB. May interact with FOS and JUN. Interacts with PCAF; this interaction impairs MAFA ubiquitination.

The protein resides in the nucleus. In terms of biological role, transcription factor involved in transcription regulation during lens development, including that of crystallin and filensin/BFSP1 genes. Binds to CRE-type MARE 5'-TGCTGACGTCAGCA-3' and TRE-type MARE 5'-TGCTGACTCAGCA-3' DNA sequences. The polypeptide is Transcription factor MafA (MAFA) (Gallus gallus (Chicken)).